A 360-amino-acid polypeptide reads, in one-letter code: Inward rectifier potassium channel 13 (360 aa).

Residues 1-50 lie on the Cytoplasmic side of the membrane; the sequence is MDSRNCKVNAPLLSQRYRRMVTKDGHSTLQMDGAQRGLVYLRDAWGILMD. A helical transmembrane segment spans residues 51-77; it reads MRWRWMMLVFSASFVVHWLVFAVLWYA. Residues 78 to 105 are Extracellular-facing; sequence VAEMNGDLEIDHDVPPENHTICVKHITS. The segment at residues 106–122 is an intramembrane region (helical; Pore-forming); it reads FTAAFSFSLETQLTIGY. The Selectivity filter signature appears at 119 to 124; it reads TIGYGT. At 123 to 131 the chain is on the extracellular side; it reads GTMFPSGDC. The chain crosses the membrane as a helical span at residues 132-157; sequence PSAIALLAIQMLLGLMLEAFITGAFV. The Cytoplasmic portion of the chain corresponds to 158–360; that stretch reads AKIARPKNRA…FQIAETGLTE (203 aa). S201 is subject to Phosphoserine; by PKC. S287 carries the post-translational modification Phosphoserine; by PKA.

The protein belongs to the inward rectifier-type potassium channel (TC 1.A.2.1) family. KCNJ13 subfamily. Homotetramer. Interacts with RAB28; the interaction may facilitate cone outer segments phagocytosis. Phosphorylation at Ser-201 by PKC strongly inhibits ionic currents, while phosphorylation at Ser-287 by PKA increases them.

The protein localises to the membrane. It localises to the cell membrane. The enzyme catalyses K(+)(in) = K(+)(out). Inhibited by Ba(2+) and Cs(+), although sensitivity to those inhibitors is much lower than in other Kir channels. Inward rectifier potassium channels are characterized by a greater tendency to allow potassium to flow into the cell rather than out of it. Their voltage dependence is regulated by the concentration of extracellular potassium; as external potassium is raised, the voltage range of the channel opening shifts to more positive voltages. The inward rectification is mainly due to the blockage of outward current by internal magnesium. KCNJ13 has a very low single channel conductance, low sensitivity to block by external barium and cesium, and no dependence of its inward rectification properties on the internal blocking particle magnesium. The sequence is that of Inward rectifier potassium channel 13 (Kcnj13) from Rattus norvegicus (Rat).